Reading from the N-terminus, the 299-residue chain is GTPase Era (299 aa).

The Era-type G domain maps to 5–175; it reads RSGFVCFVGR…TNVLVSQLPP (171 aa). The segment at 13–20 is G1; it reads GRPNTGKS. 13–20 lines the GTP pocket; the sequence is GRPNTGKS. The tract at residues 39–43 is G2; that stretch reads QTTRH. A G3 region spans residues 60–63; the sequence is DTPG. Residues 60–64 and 124–127 contribute to the GTP site; these read DTPGL and TKID. The tract at residues 124 to 127 is G4; the sequence is TKID. Positions 154–156 are G5; it reads VSA. Residues 206–285 form the KH type-2 domain; sequence VRDELPHSLA…YLDLRVKIAK (80 aa).

It belongs to the TRAFAC class TrmE-Era-EngA-EngB-Septin-like GTPase superfamily. Era GTPase family. As to quaternary structure, monomer. Stays in the monomer conformation, irrespective of the presence of GTP.

The protein localises to the cell envelope. Its subcellular location is the secreted. The protein resides in the cell wall. Its activity is regulated as follows. Co-purified with RNA upon overexpression in E.coli, but RNAs do not appear to influence the GTPase activity. Its function is as follows. Exhibits GTPase activity. Binds RNA but is probably not involved in ribosome assembly in mycobacteria. Cannot use ATP. This Mycolicibacterium smegmatis (strain ATCC 700084 / mc(2)155) (Mycobacterium smegmatis) protein is GTPase Era.